The chain runs to 204 residues: Carbon disulfide hydrolase (204 aa).

3 residues coordinate Zn(2+): C35, H88, and C91.

This sequence belongs to the beta-class carbonic anhydrase family. As to quaternary structure, forms a hexadecameric catenane homooligomer, through interactions of two interlocked octameric rings. Zn(2+) is required as a cofactor.

It carries out the reaction carbon disulfide + 2 H2O = 2 hydrogen sulfide + CO2 + 2 H(+). It functions in the pathway sulfur metabolism; hydrogen sulfide biosynthesis. Catalyzes the conversion of carbon disulfide into hydrogen sulfide and carbon dioxide, with carbonyl sulfide as an intermediate. Likely plays a key role in sulfur metabolism in S.solfataricus. Does not show carbonic anhydrase activity (hydration of CO(2) to carbonate). The protein is Carbon disulfide hydrolase of Saccharolobus solfataricus (strain ATCC 35092 / DSM 1617 / JCM 11322 / P2) (Sulfolobus solfataricus).